The sequence spans 190 residues: Small ribosomal subunit protein uS5 (190 aa).

The S5 DRBM domain maps to 22–85 (FVDKLVHINR…DSAKRNLTRV (64 aa)).

This sequence belongs to the universal ribosomal protein uS5 family. Part of the 30S ribosomal subunit. Contacts proteins S4 and S8.

In terms of biological role, with S4 and S12 plays an important role in translational accuracy. Located at the back of the 30S subunit body where it stabilizes the conformation of the head with respect to the body. The sequence is that of Small ribosomal subunit protein uS5 from Bradyrhizobium sp. (strain BTAi1 / ATCC BAA-1182).